Consider the following 210-residue polypeptide: Glutathione S-transferase mdpJ (210 aa).

One can recognise a GST N-terminal domain in the interval 2 to 83 (SFGTLYTHNP…YCNDERSSLR (82 aa)). A GST C-terminal domain is found at 77–200 (DERSSLRILQ…VAGGVPDLGL (124 aa)).

It belongs to the GST superfamily.

It functions in the pathway secondary metabolite biosynthesis. Its function is as follows. Glutathione S-transferase; part of the gene cluster that mediates the biosynthesis of monodictyphenone, a prenyl xanthone derivative. The pathway begins with the synthesis of atrochrysone thioester by the polyketide synthase (PKS) mdpG. The atrochrysone carboxyl ACP thioesterase mdpF then breaks the thioester bond and releases the atrochrysone carboxylic acid from mdpG. The atrochrysone carboxylic acid is then converted to atrochrysone which is further transformed into emodin anthrone. The next step is performed by the anthrone oxygenase mdpH that catalyzes the oxidation of emodinanthrone to emodin. Emodin is further modified to yield monodictyphenone via several steps involving mdpB, mdpC mdpJ, mdpK and mdpL. These enzymes with xptA, xptB and xptC are also proposed to be involved in the synthesis of shamixanthone from emodin. Especially, direct reduction of emodin by the short chain dehydrogenase mdpC followed by dehydration catalyzed by the scytalone dehydratase-like protein mdpB gives loss of oxygen and formation of chrysophanol intermediate in two simple steps. This Emericella nidulans (strain FGSC A4 / ATCC 38163 / CBS 112.46 / NRRL 194 / M139) (Aspergillus nidulans) protein is Glutathione S-transferase mdpJ.